Consider the following 283-residue polypeptide: 2-dehydro-3-deoxyphosphooctonate aldolase (283 aa).

It belongs to the KdsA family.

It localises to the cytoplasm. It catalyses the reaction D-arabinose 5-phosphate + phosphoenolpyruvate + H2O = 3-deoxy-alpha-D-manno-2-octulosonate-8-phosphate + phosphate. It functions in the pathway carbohydrate biosynthesis; 3-deoxy-D-manno-octulosonate biosynthesis; 3-deoxy-D-manno-octulosonate from D-ribulose 5-phosphate: step 2/3. The protein operates within bacterial outer membrane biogenesis; lipopolysaccharide biosynthesis. This chain is 2-dehydro-3-deoxyphosphooctonate aldolase, found in Vibrio parahaemolyticus serotype O3:K6 (strain RIMD 2210633).